Consider the following 431-residue polypeptide: Glucose-1-phosphate adenylyltransferase (431 aa).

Lysine 39 serves as a coordination point for beta-D-fructose 1,6-bisphosphate. AMP is bound by residues arginine 40, histidine 46, and arginine 52. Position 114 (tyrosine 114) interacts with alpha-D-glucose 1-phosphate. Residue arginine 130 participates in AMP binding. Alpha-D-glucose 1-phosphate-binding positions include glycine 179, 194-195 (EK), and serine 212. Positions 370 and 386 each coordinate AMP. Residues 419–423 (REMLR) and 429–431 (QER) each bind beta-D-fructose 1,6-bisphosphate.

Belongs to the bacterial/plant glucose-1-phosphate adenylyltransferase family. Homotetramer.

It carries out the reaction alpha-D-glucose 1-phosphate + ATP + H(+) = ADP-alpha-D-glucose + diphosphate. The protein operates within glycan biosynthesis; glycogen biosynthesis. Allosterically activated by fructose-1,6-bisphosphate (F16BP) and inhibited by AMP. Involved in the biosynthesis of ADP-glucose, a building block required for the elongation reactions to produce glycogen. Catalyzes the reaction between ATP and alpha-D-glucose 1-phosphate (G1P) to produce pyrophosphate and ADP-Glc. This is Glucose-1-phosphate adenylyltransferase from Escherichia coli O127:H6 (strain E2348/69 / EPEC).